The following is a 72-amino-acid chain: Translation initiation factor IF-1 1 (72 aa).

Residues 1-72 (MAKEDRIEMQ…SRARIIFRAK (72 aa)) enclose the S1-like domain.

Belongs to the IF-1 family. In terms of assembly, component of the 30S ribosomal translation pre-initiation complex which assembles on the 30S ribosome in the order IF-2 and IF-3, IF-1 and N-formylmethionyl-tRNA(fMet); mRNA recruitment can occur at any time during PIC assembly.

The protein resides in the cytoplasm. One of the essential components for the initiation of protein synthesis. Stabilizes the binding of IF-2 and IF-3 on the 30S subunit to which N-formylmethionyl-tRNA(fMet) subsequently binds. Helps modulate mRNA selection, yielding the 30S pre-initiation complex (PIC). Upon addition of the 50S ribosomal subunit IF-1, IF-2 and IF-3 are released leaving the mature 70S translation initiation complex. In Methylobacillus flagellatus (strain ATCC 51484 / DSM 6875 / VKM B-1610 / KT), this protein is Translation initiation factor IF-1 1.